The sequence spans 100 residues: Small ribosomal subunit protein uS14c (100 aa).

This sequence belongs to the universal ribosomal protein uS14 family. In terms of assembly, part of the 30S ribosomal subunit.

The protein localises to the plastid. It is found in the chloroplast. Its function is as follows. Binds 16S rRNA, required for the assembly of 30S particles. The sequence is that of Small ribosomal subunit protein uS14c from Crucihimalaya wallichii (Rock-cress).